A 292-amino-acid chain; its full sequence is MINTWPSPAKINLFLYVTGIRSDGYHYIQSLFQFLNYGDTLTIIPNTKGTIELFTESNSLVNIKNSIITAAELLKEKALHSLGKKTSHFGAKIFLNKKIPIGSGLGGGSSNAATTLVVLNNLWKTKFTLQELAELSLKIGSDIPAFIMGKTTIVEGIGEILYPIHRKEKWYLIVYPNISISTKNIFSIYSIKKNTIKKPIDFLLRSRFHNDFENVIKKKFKKIKQLISMLSLYAPSRITGTGSCIFAEFNDKKSAQKIHSLLPHNVQGTIVKSVNVSPLHHAFYKKNINLFN.

K10 is a catalytic residue. 100-110 (PIGSGLGGGSS) provides a ligand contact to ATP. The active site involves D142.

Belongs to the GHMP kinase family. IspE subfamily. In terms of assembly, homodimer.

It carries out the reaction 4-CDP-2-C-methyl-D-erythritol + ATP = 4-CDP-2-C-methyl-D-erythritol 2-phosphate + ADP + H(+). Its pathway is isoprenoid biosynthesis; isopentenyl diphosphate biosynthesis via DXP pathway; isopentenyl diphosphate from 1-deoxy-D-xylulose 5-phosphate: step 3/6. Catalyzes the phosphorylation of the position 2 hydroxy group of 4-diphosphocytidyl-2C-methyl-D-erythritol. This chain is 4-diphosphocytidyl-2-C-methyl-D-erythritol kinase, found in Buchnera aphidicola subsp. Schizaphis graminum (strain Sg).